A 273-amino-acid polypeptide reads, in one-letter code: Putative pyruvate, phosphate dikinase regulatory protein (273 aa).

Residue Gly-153–Ser-160 participates in ADP binding.

The protein belongs to the pyruvate, phosphate/water dikinase regulatory protein family. PDRP subfamily.

The enzyme catalyses N(tele)-phospho-L-histidyl/L-threonyl-[pyruvate, phosphate dikinase] + ADP = N(tele)-phospho-L-histidyl/O-phospho-L-threonyl-[pyruvate, phosphate dikinase] + AMP + H(+). The catalysed reaction is N(tele)-phospho-L-histidyl/O-phospho-L-threonyl-[pyruvate, phosphate dikinase] + phosphate + H(+) = N(tele)-phospho-L-histidyl/L-threonyl-[pyruvate, phosphate dikinase] + diphosphate. Its function is as follows. Bifunctional serine/threonine kinase and phosphorylase involved in the regulation of the pyruvate, phosphate dikinase (PPDK) by catalyzing its phosphorylation/dephosphorylation. The chain is Putative pyruvate, phosphate dikinase regulatory protein from Ehrlichia chaffeensis (strain ATCC CRL-10679 / Arkansas).